The sequence spans 72 residues: Protein RALF-like 20 (72 aa).

Positions 1-27 (MVLSKKTIMQSFALMIILSIVMSTTEA) are cleaved as a signal peptide. Cystine bridges form between Cys43–Cys51 and Cys63–Cys69.

This sequence belongs to the plant rapid alkalinization factor (RALF) family.

It localises to the secreted. Functionally, cell signaling peptide that may regulate plant stress, growth, and development. Mediates a rapid alkalinization of extracellular space by mediating a transient increase in the cytoplasmic Ca(2+) concentration leading to a calcium-dependent signaling events through a cell surface receptor and a concomitant activation of some intracellular mitogen-activated protein kinases. The chain is Protein RALF-like 20 (RALFL20) from Arabidopsis thaliana (Mouse-ear cress).